Reading from the N-terminus, the 293-residue chain is MAIISEMEEARPSMVPFTASFDPSNPIAFLEKVLDVIGKESNFLKKDTAEKEIVAAVMAAKQRLREAEKKKLEKESVKSMEVEKPKKDSLKPTELEKPKEESLMATDPMEIEKPKEEKESGPIVPNKGNGLDFEKYSWGQNLQEVTINIPMPEGTKSRSVTCEIKKNRLKVGLKGQDLIVDGEFFNSVKPDDCFWNIEDQKMISVLLTKQDQMEWWKYCVKGEPEIDTQKVEPETSKLGDLDPETRASVEKMMFDQRQKQMGLPRSDEIEKKDMLKKFMAQNPGMDFSNAKFN.

At Ala-2 the chain carries N-acetylalanine. Positions 50–80 (EKEIVAAVMAAKQRLREAEKKKLEKESVKSM) form a coiled coil. 2 stretches are compositionally biased toward basic and acidic residues: residues 67–102 (AEKK…KEES) and 110–120 (EIEKPKEEKES). The segment at 67–125 (AEKKKLEKESVKSMEVEKPKKDSLKPTELEKPKEESLMATDPMEIEKPKEEKESGPIVP) is disordered. The CS domain maps to 131 to 220 (LDFEKYSWGQ…DQMEWWKYCV (90 aa)).

The protein resides in the cytoplasm. It is found in the cytoplasmic granule. Small heat shock protein required for the establishment of auxin gradients and for patterning of the apical domain of the embryo. Involved in the specification of the cotyledon primordia. Also required for normal inflorescence and floral meristem function, normal developmental patterning and thermotolerance. Acts as a molecular chaperone. The polypeptide is Protein BOBBER 2 (BOB2) (Arabidopsis thaliana (Mouse-ear cress)).